Consider the following 564-residue polypeptide: Ubiquitin carboxyl-terminal hydrolase 39 (564 aa).

The disordered stretch occupies residues 1-96; sequence MSSRSKRQSH…VRAKNGRVDS (96 aa). A compositionally biased stretch (basic and acidic residues) spans 28–39; that stretch reads IKKERDREKEPE. Ser-46 carries the post-translational modification Phosphoserine. A Glycyl lysine isopeptide (Lys-Gly) (interchain with G-Cter in SUMO2) cross-link involves residue Lys-51. Positions 59–69 are enriched in low complexity; sequence REVPAPALPVV. A Phosphoserine modification is found at Ser-81. Positions 84–96 are enriched in basic and acidic residues; it reads EREVRAKNGRVDS. The segment at 102–199 adopts a UBP-type; degenerate zinc-finger fold; it reads RHCPYLDTIN…YVLKPTFTKQ (98 aa). The Zn(2+) site is built by Cys-135, Cys-138, His-154, and His-160. Residues 224-554 form the USP domain; sequence VGLNNIKAND…EAYIQIWKRR (331 aa).

It belongs to the peptidase C19 family. As to quaternary structure, the U4/U6-U5 tri-snRNP complex is a building block of the precatalytic spliceosome (spliceosome B complex). Component of the U4/U6-U5 tri-snRNP complex composed of the U4, U6 and U5 snRNAs and at least PRPF3, PRPF4, PRPF6, PRPF8, PRPF31, SNRNP200, TXNL4A, SNRNP40, SNRPB, SNRPD1, SNRPD2, SNRPD3, SNRPE, SNRPF, SNRPG, DDX23, CD2BP2, PPIH, SNU13, EFTUD2, SART1 and USP39, plus LSM2, LSM3, LSM4, LSM5, LSM6, LSM7 and LSM8.

It is found in the nucleus. It carries out the reaction Thiol-dependent hydrolysis of ester, thioester, amide, peptide and isopeptide bonds formed by the C-terminal Gly of ubiquitin (a 76-residue protein attached to proteins as an intracellular targeting signal).. In terms of biological role, deubiquitinating enzyme that plays a role in many cellular processes including cellular antiviral response, epithelial morphogenesis, DNA repair or B-cell development. Plays a role in pre-mRNA splicing as a component of the U4/U6-U5 tri-snRNP, one of the building blocks of the precatalytic spliceosome. Specifically regulates immunoglobulin gene rearrangement in a spliceosome-dependent manner, which involves modulating chromatin interactions at the Igh locus and therefore plays an essential role in B-cell development. Regulates AURKB mRNA levels, and thereby plays a role in cytokinesis and in the spindle checkpoint. Regulates apoptosis and G2/M cell cycle checkpoint in response to DNA damage by deubiquitinating and stabilizing CHK2. Also plays an important role in DNA repair by controlling the recruitment of XRCC4/LIG4 to DNA double-strand breaks for non-homologous end-joining repair. Participates in antiviral activity by affecting the type I IFN signaling by stabilizing STAT1 and decreasing its 'Lys-6'-linked ubiquitination. Contributes to non-canonical Wnt signaling during epidermal differentiation. Acts as a negative regulator NF-kappa-B activation through deubiquitination of 'Lys-48'-linked ubiquitination of NFKBIA. This Mus musculus (Mouse) protein is Ubiquitin carboxyl-terminal hydrolase 39.